The following is a 305-amino-acid chain: UDP-3-O-acyl-N-acetylglucosamine deacetylase (305 aa).

Positions 79, 238, and 242 each coordinate Zn(2+). The Proton donor role is filled by His-265.

The protein belongs to the LpxC family. Zn(2+) serves as cofactor.

The catalysed reaction is a UDP-3-O-[(3R)-3-hydroxyacyl]-N-acetyl-alpha-D-glucosamine + H2O = a UDP-3-O-[(3R)-3-hydroxyacyl]-alpha-D-glucosamine + acetate. It participates in glycolipid biosynthesis; lipid IV(A) biosynthesis; lipid IV(A) from (3R)-3-hydroxytetradecanoyl-[acyl-carrier-protein] and UDP-N-acetyl-alpha-D-glucosamine: step 2/6. Catalyzes the hydrolysis of UDP-3-O-myristoyl-N-acetylglucosamine to form UDP-3-O-myristoylglucosamine and acetate, the committed step in lipid A biosynthesis. This is UDP-3-O-acyl-N-acetylglucosamine deacetylase from Vibrio parahaemolyticus serotype O3:K6 (strain RIMD 2210633).